Consider the following 323-residue polypeptide: MPSVFFSYSHADEGLRDQLEKQLSMLKRQGVIETWHDRRIGAGEDIHRAIDDHINTDDIILLLVSADFIASDYCYDIEMQRAMERHHSGEAIVIPIILRACDWHHAPFGKLNAVPRDGKPITQWPDIDEAFLQVAKAVREAAGRVTRTASAPPARAAAAATPAASPAPQSLGPRSSNLRLAKSFTQRDKDQFRHDTFEYIARFFENSLKELGERNAGFEGVFRRVDANRFFATIYRDGKDVSRGTAYLGGETWGRGINYVHGETTSSNSSNESLNVEADDQTLFLTSMGMASFGRDRDQKLSQEGAAELLWAILIAPLQGTRY.

Residues Met1–Ala142 enclose the TIR domain.

This is an uncharacterized protein from Sinorhizobium fredii (strain NBRC 101917 / NGR234).